Reading from the N-terminus, the 426-residue chain is Serine--tRNA ligase (426 aa).

Residue 233 to 235 (TAE) participates in L-serine binding. 264 to 266 (RSE) contributes to the ATP binding site. Glutamate 287 is an L-serine binding site. Residue 351 to 354 (EISS) participates in ATP binding. Serine 387 contributes to the L-serine binding site.

This sequence belongs to the class-II aminoacyl-tRNA synthetase family. Type-1 seryl-tRNA synthetase subfamily. As to quaternary structure, homodimer. The tRNA molecule binds across the dimer.

The protein resides in the cytoplasm. The enzyme catalyses tRNA(Ser) + L-serine + ATP = L-seryl-tRNA(Ser) + AMP + diphosphate + H(+). It catalyses the reaction tRNA(Sec) + L-serine + ATP = L-seryl-tRNA(Sec) + AMP + diphosphate + H(+). The protein operates within aminoacyl-tRNA biosynthesis; selenocysteinyl-tRNA(Sec) biosynthesis; L-seryl-tRNA(Sec) from L-serine and tRNA(Sec): step 1/1. Catalyzes the attachment of serine to tRNA(Ser). Is also able to aminoacylate tRNA(Sec) with serine, to form the misacylated tRNA L-seryl-tRNA(Sec), which will be further converted into selenocysteinyl-tRNA(Sec). The sequence is that of Serine--tRNA ligase from Clostridium botulinum (strain Loch Maree / Type A3).